A 221-amino-acid chain; its full sequence is Tetraspanin-2 (221 aa).

The Cytoplasmic segment spans residues methionine 1 to tyrosine 13. Residues leucine 14–leucine 34 traverse the membrane as a helical segment. The Extracellular segment spans residues tryptophan 35–tyrosine 54. The chain crosses the membrane as a helical span at residues phenylalanine 55 to phenylalanine 75. At glycine 76–serine 90 the chain is on the cytoplasmic side. The chain crosses the membrane as a helical span at residues phenylalanine 91 to isoleucine 111. Residues glycine 112–leucine 188 lie on the Extracellular side of the membrane. N-linked (GlcNAc...) asparagine glycosylation is present at asparagine 139. Residues isoleucine 189–valine 209 form a helical membrane-spanning segment. Residues leucine 210–isoleucine 221 lie on the Cytoplasmic side of the membrane.

Belongs to the tetraspanin (TM4SF) family.

Its subcellular location is the membrane. Its function is as follows. May play a role in signalling in oligodendrocytes in the early stages of their terminal differentiation into myelin-forming glia and may also function in stabilizing the mature sheath. In Mus musculus (Mouse), this protein is Tetraspanin-2 (Tspan2).